The following is a 374-amino-acid chain: Flagellar P-ring protein (374 aa).

The first 29 residues, 1–29, serve as a signal peptide directing secretion; that stretch reads MSGLGFTGVVRIAVMALLALAFLGAPAHA. Residues 296–311 are compositionally biased toward polar residues; the sequence is ESPQVSQPNPLSNGRT. Residues 296–316 form a disordered region; it reads ESPQVSQPNPLSNGRTVMTPR.

This sequence belongs to the FlgI family. In terms of assembly, the basal body constitutes a major portion of the flagellar organelle and consists of four rings (L,P,S, and M) mounted on a central rod.

The protein localises to the periplasm. The protein resides in the bacterial flagellum basal body. Functionally, assembles around the rod to form the L-ring and probably protects the motor/basal body from shearing forces during rotation. The polypeptide is Flagellar P-ring protein (Nitrobacter winogradskyi (strain ATCC 25391 / DSM 10237 / CIP 104748 / NCIMB 11846 / Nb-255)).